Here is a 334-residue protein sequence, read N- to C-terminus: D-fructose 1,6-bisphosphatase class 2/sedoheptulose 1,7-bisphosphatase (334 aa).

Mn(2+) is bound by residues Asp33, Glu57, Asp85, and Glu88. Residues 88 to 90 (EGT), Tyr119, 164 to 166 (RAR), and 186 to 188 (DGD) each bind substrate. Glu213 lines the Mn(2+) pocket.

Belongs to the FBPase class 2 family. As to quaternary structure, homotetramer. Mn(2+) is required as a cofactor.

It catalyses the reaction beta-D-fructose 1,6-bisphosphate + H2O = beta-D-fructose 6-phosphate + phosphate. It carries out the reaction D-sedoheptulose 1,7-bisphosphate + H2O = D-sedoheptulose 7-phosphate + phosphate. It functions in the pathway carbohydrate biosynthesis; Calvin cycle. Functionally, catalyzes the hydrolysis of fructose 1,6-bisphosphate (Fru 1,6-P2) and sedoheptulose 1,7-bisphosphate (Sed 1,7-P2) to fructose 6-phosphate and sedoheptulose 7-phosphate, respectively. This Prochlorococcus marinus (strain NATL1A) protein is D-fructose 1,6-bisphosphatase class 2/sedoheptulose 1,7-bisphosphatase.